A 250-amino-acid polypeptide reads, in one-letter code: Probable transcriptional regulatory protein Cphamn1_0542 (250 aa).

This sequence belongs to the TACO1 family.

Its subcellular location is the cytoplasm. In Chlorobium phaeobacteroides (strain BS1), this protein is Probable transcriptional regulatory protein Cphamn1_0542.